The chain runs to 763 residues: U3 small nucleolar RNA-associated protein 25 homolog (763 aa).

Residues 1-164 (MGKRRSRGRS…SQKSSEEFTD (164 aa)) are disordered. Promotes p53/TP53 degradation stretches follow at residues 1–190 (MGKR…SQRT) and 580–642 (VQLP…KKEE). Ser10 is subject to Phosphoserine. The segment covering 25–43 (RDFGEEHPFYDRVSKKEVK) has biased composition (basic and acidic residues). Phosphoserine is present on residues Ser52, Ser60, and Ser64. Over residues 54 to 70 (DSSHSESESESEQEHVS) the composition is skewed to basic and acidic residues. A compositionally biased stretch (acidic residues) spans 84–119 (EEEEEEEEEEEEEEEDKEEVDDSAVGDSEMNGEDGG). Residues 643-704 (LNFTHICEYT…YELPTYAHFY (62 aa)) form a represses p53/TP53 degradation region.

The protein belongs to the UTP25 family. In terms of assembly, interacts with CAPN3; the interaction is required for CAPN3 translocation to the nucleolus. In terms of processing, phosphorylated. Phosphorylation is required to promote p53/TP53 degradation in the nucleolus which promotes cell cycle progression and liver development.

The protein localises to the nucleus. It localises to the nucleolus. Functionally, component of the ribosomal small subunit processome for the biogenesis of ribosomes, functions in pre-ribosomal RNA (pre-rRNA) processing. Essential for embryonic development in part through the regulation of p53 pathway. Controls the expansion growth of digestive organs and liver. Also involved in the sympathetic neuronal development. Mediates, with CAPN3, the proteasome-independent degradation of p53/TP53. In Rattus norvegicus (Rat), this protein is U3 small nucleolar RNA-associated protein 25 homolog.